Reading from the N-terminus, the 292-residue chain is Sulfhydrogenase 1 subunit gamma (292 aa).

The 101-residue stretch at 15–115 (YALHRVKVLK…RGPYGNGFPV (101 aa)) folds into the FAD-binding FR-type domain. Cys-253, Cys-258, Cys-261, and Cys-273 together coordinate [2Fe-2S] cluster.

As to quaternary structure, heterotetramer of alpha, beta, gamma and delta subunits. The nickel-containing alpha and delta subunits constitute the hydrogenase activity. The beta and gamma subunits (flavin-containing dimer) constitute the sulfur reductase activity. FAD serves as cofactor. The cofactor is [2Fe-2S] cluster.

Its subcellular location is the cytoplasm. It carries out the reaction n sulfur + H2 = (n-1) sulfur + hydrogen sulfide + H(+). Stimulated by rubredoxin at pH 7.6 but not ferredoxin. In terms of biological role, part of a bifunctional enzyme complex that functions as an NADPH-dependent hydrogen-evolving hydrogenase with sulfur reducing activity. May play a role in hydrogen cycling during fermentative growth. Activity not exhibited with NAD. The beta and gamma subunits form the sulfur reducing component that catalyzes the cytoplasmic production of hydrogen sulfide in the presence of elemental sulfur. Not active in the presence of sodium sulfate, sodium sulfite, sodium thiosulfate or cysteine. The polypeptide is Sulfhydrogenase 1 subunit gamma (Pyrococcus furiosus (strain ATCC 43587 / DSM 3638 / JCM 8422 / Vc1)).